A 154-amino-acid chain; its full sequence is tRNA (cytidine(34)-2'-O)-methyltransferase (154 aa).

Positions 78, 100, 122, and 130 each coordinate S-adenosyl-L-methionine.

The protein belongs to the class IV-like SAM-binding methyltransferase superfamily. RNA methyltransferase TrmH family. TrmL subfamily. In terms of assembly, homodimer.

The protein resides in the cytoplasm. It catalyses the reaction cytidine(34) in tRNA + S-adenosyl-L-methionine = 2'-O-methylcytidine(34) in tRNA + S-adenosyl-L-homocysteine + H(+). The enzyme catalyses 5-carboxymethylaminomethyluridine(34) in tRNA(Leu) + S-adenosyl-L-methionine = 5-carboxymethylaminomethyl-2'-O-methyluridine(34) in tRNA(Leu) + S-adenosyl-L-homocysteine + H(+). Its function is as follows. Methylates the ribose at the nucleotide 34 wobble position in the two leucyl isoacceptors tRNA(Leu)(CmAA) and tRNA(Leu)(cmnm5UmAA). Catalyzes the methyl transfer from S-adenosyl-L-methionine to the 2'-OH of the wobble nucleotide. The polypeptide is tRNA (cytidine(34)-2'-O)-methyltransferase (Methylovorus glucosotrophus (strain SIP3-4)).